Here is a 343-residue protein sequence, read N- to C-terminus: Dihydroorotase (343 aa).

Residues His-14 and His-16 each contribute to the Zn(2+) site. Substrate is bound by residues 16 to 18 (HLR) and Asn-42. Zn(2+)-binding residues include Lys-100, His-137, and His-175. Lys-100 is modified (N6-carboxylysine). His-137 serves as a coordination point for substrate. Leu-220 serves as a coordination point for substrate. Asp-248 is a binding site for Zn(2+). Asp-248 is a catalytic residue. Substrate contacts are provided by His-252 and Ala-264.

It belongs to the metallo-dependent hydrolases superfamily. DHOase family. Class II DHOase subfamily. In terms of assembly, homodimer. The cofactor is Zn(2+).

It catalyses the reaction (S)-dihydroorotate + H2O = N-carbamoyl-L-aspartate + H(+). Its pathway is pyrimidine metabolism; UMP biosynthesis via de novo pathway; (S)-dihydroorotate from bicarbonate: step 3/3. Its function is as follows. Catalyzes the reversible cyclization of carbamoyl aspartate to dihydroorotate. In Parasynechococcus marenigrum (strain WH8102), this protein is Dihydroorotase.